Here is a 230-residue protein sequence, read N- to C-terminus: Oxaloacetate tautomerase FAHD1, mitochondrial (230 aa).

A mitochondrion-targeting transit peptide spans 1-26 (MAAAAAAAAQRLLAASTKIIGVGRNY). 3 residues coordinate Mg(2+): E73, E75, and D104.

Belongs to the FAH family. Requires Mg(2+) as cofactor. The cofactor is Mn(2+).

It is found in the mitochondrion. The enzyme catalyses oxaloacetate = enol-oxaloacetate. In terms of biological role, tautomerase that converts enol-oxaloacetate, a strong inhibitor of succinate dehydrogenase, to the physiological keto form of oxaloacetate. This chain is Oxaloacetate tautomerase FAHD1, mitochondrial, found in Oryza sativa subsp. japonica (Rice).